Here is a 312-residue protein sequence, read N- to C-terminus: Phospholipid phosphatase 3 (312 aa).

At 1 to 33 the chain is on the cytoplasmic side; it reads MQSYKYDKAIVPESKNGGSPALNNNPRKGGSKR. Ser-19 is modified (phosphoserine). A helical membrane pass occupies residues 34 to 54; it reads VLLICLDLFCLFMAALPFLII. Topologically, residues 55-85 are extracellular; that stretch reads ETSTIKPYRRGFYCNDESIKYPLKVSETIND. A helical transmembrane segment spans residues 86-106; sequence AVLCAVGIVIAILRIITGEFY. The Cytoplasmic portion of the chain corresponds to 107-123; the sequence is RIYYLKEKSRSTIQNPY. Residues 109 to 110 carry the Dityrosine basolateral targeting motif motif; it reads YY. The chain crosses the membrane as a helical span at residues 124-144; the sequence is VAALYKQVGCFLFGCAISQSF. Over 145 to 194 the chain is Extracellular; sequence TDIAKVSIGRLRPHFLSVCDPDFSQINCSEGYIQNYRCRGEDSKVQEARK. The segment at 149 to 157 is phosphatase sequence motif I; that stretch reads KVSIGRLRP. N-linked (GlcNAc...) asparagine glycosylation is present at Asn-171. The Integrin-binding motif signature appears at 183-185; it reads RGE. Residues 195 to 215 traverse the membrane as a helical segment; the sequence is SFFSGHASFSMFTMLYLVLYL. The segment at 197 to 200 is phosphatase sequence motif II; the sequence is FSGH. Catalysis depends on His-200, which acts as the Proton donors. Topologically, residues 216–226 are cytoplasmic; sequence QARFTWRGARL. Residues 227–244 traverse the membrane as a helical segment; sequence LRPLLQFTLLMMAFYTGL. The phosphatase sequence motif III stretch occupies residues 245–256; sequence SRVSDYKHHPSD. Residues 245 to 258 are Extracellular-facing; sequence SRVSDYKHHPSDVL. His-252 functions as the Nucleophile in the catalytic mechanism. A helical membrane pass occupies residues 259-279; sequence AGFAQGALVACCIVFFVSDLF. Residues 276 to 312 are mediates interaction with CTNND1; sequence SDLFKTKTTLSLPAPAIRREILSPVDIMDRSNHHNMV. The Cytoplasmic segment spans residues 280–312; the sequence is KTKTTLSLPAPAIRREILSPVDIMDRSNHHNMV.

The protein belongs to the PA-phosphatase related phosphoesterase family. As to quaternary structure, forms functional homodimers and homooligomers that are not required for substrate recognition and catalytic activity. Can also form heterooligomers with other PLPP2 and PLPP3. Interacts with CTNND1; negatively regulates the PLPP3-mediated stabilization of beta-catenin/CTNNB1. N-glycosylated. Contains high-mannose oligosaccharides. As to expression, detected in epithelial cells of intestinal mucosa, lung, liver and brain.

It is found in the cell membrane. The protein resides in the basolateral cell membrane. It localises to the endoplasmic reticulum membrane. The protein localises to the endoplasmic reticulum-Golgi intermediate compartment membrane. Its subcellular location is the golgi apparatus membrane. It is found in the golgi apparatus. The protein resides in the trans-Golgi network membrane. It localises to the membrane raft. It catalyses the reaction a 1,2-diacyl-sn-glycero-3-phosphate + H2O = a 1,2-diacyl-sn-glycerol + phosphate. The enzyme catalyses 1,2-dihexadecanoyl-sn-glycero-3-phosphate + H2O = 1,2-dihexadecanoyl-sn-glycerol + phosphate. The catalysed reaction is 1,2-di-(9Z-octadecenoyl)-sn-glycero-3-phosphate + H2O = 1,2-di-(9Z-octadecenoyl)-sn-glycerol + phosphate. It carries out the reaction a monoacyl-sn-glycero-3-phosphate + H2O = a monoacylglycerol + phosphate. It catalyses the reaction (9Z)-octadecenoyl-sn-glycero-3-phosphate + H2O = (9Z-octadecenoyl)-glycerol + phosphate. The enzyme catalyses sphing-4-enine 1-phosphate + H2O = sphing-4-enine + phosphate. The catalysed reaction is an N-acylsphing-4-enine 1-phosphate + H2O = an N-acylsphing-4-enine + phosphate. It carries out the reaction N-(octanoyl)-sphing-4-enine-1-phosphate + H2O = N-octanoylsphing-4-enine + phosphate. It catalyses the reaction N-(9Z-octadecenoyl)-ethanolamine phosphate + H2O = N-(9Z-octadecenoyl) ethanolamine + phosphate. It participates in lipid metabolism; phospholipid metabolism. With respect to regulation, magnesium-independent phospholipid phosphatase. Insensitive to N-ethylmaleimide. Inhibited by sphingosine, zinc ions and modestly by propanolol. Its function is as follows. Magnesium-independent phospholipid phosphatase of the plasma membrane that catalyzes the dephosphorylation of a variety of glycerolipid and sphingolipid phosphate esters including phosphatidate/PA, lysophosphatidate/LPA, diacylglycerol pyrophosphate/DGPP, sphingosine 1-phosphate/S1P and ceramide 1-phosphate/C1P. Also acts on N-oleoyl ethanolamine phosphate/N-(9Z-octadecenoyl)-ethanolamine phosphate, a potential physiological compound. Has both an extracellular and an intracellular phosphatase activity, allowing the hydrolysis and the cellular uptake of these bioactive lipid mediators from the milieu, regulating signal transduction in different cellular processes. Through the dephosphorylation of extracellular sphingosine-1-phosphate and the regulation of its extra- and intracellular availability, plays a role in vascular homeostasis, regulating endothelial cell migration, adhesion, survival, proliferation and the production of pro-inflammatory cytokines. By maintaining the appropriate levels of this lipid in the cerebellum, also ensure its proper development and function. Through its intracellular lipid phosphatase activity may act in early compartments of the secretory pathway, regulating the formation of Golgi to endoplasmic reticulum retrograde transport carriers. In terms of biological role, independently of this phosphatase activity may also function in the Wnt signaling pathway and the stabilization of beta-catenin/CTNNB1, thereby regulating cell proliferation, migration and differentiation in angiogenesis or yet in tumor growth. Also plays a role in integrin-mediated cell-cell adhesion in angiogenesis. In Rattus norvegicus (Rat), this protein is Phospholipid phosphatase 3.